A 91-amino-acid chain; its full sequence is MASLKKSLFLVLFLGLVSLSICEKEKRENEGNENEEEEENHEEGSEEKRGLLDLAKHVIGIASKLGKRSEEKRGLLDFAKHVIGIASKLGK.

The signal sequence occupies residues 1–22; it reads MASLKKSLFLVLFLGLVSLSIC. The propeptide occupies 23–49; that stretch reads EKEKRENEGNENEEEEENHEEGSEEKR. A disordered region spans residues 24 to 49; sequence KEKRENEGNENEEEEENHEEGSEEKR. The span at 31-41 shows a compositional bias: acidic residues; sequence GNENEEEEENH. Leucine 65 bears the Leucine amide mark. The propeptide occupies 69–73; it reads SEEKR. At leucine 89 the chain carries Leucine amide.

The protein belongs to the frog skin active peptide (FSAP) family. Dermaseptin subfamily. Expressed by the skin glands.

It is found in the secreted. Fallaxidin-3.1 shows antibacterial activity against the Gram-positive bacteria E.faecalis (MIC=100 uM) and L.lactis (MIC=100 uM). No antibacterial activity against the Gram-positive bacteria B.cereus, L.innocua, M.luteus, S.epidermidis, S.uberis and S.aureus, or the Gram-negative bacteria E.cloacae and E.coli. Its function is as follows. Fallaxidin-3.2 shows antibacterial activity against the Gram-positive bacteria E.faecalis (MIC=100 uM) and L.lactis (MIC=500 uM). No antibacterial activity against the Gram-positive bacteria B.cereus, L.innocua, M.luteus, S.epidermidis, S.uberis and S.aureus, or the Gram-negative bacteria E.cloacae and E.coli. This chain is Preprofallaxidin-2, found in Litoria fallax (Eastern dwarf tree frog).